A 348-amino-acid chain; its full sequence is Dihydroorotase (348 aa).

Zn(2+) contacts are provided by histidine 17 and histidine 19. Residues 19 to 21 and asparagine 45 each bind substrate; that span reads HLR. Residues lysine 103, histidine 140, and histidine 178 each coordinate Zn(2+). Lysine 103 carries the post-translational modification N6-carboxylysine. Residue histidine 140 coordinates substrate. Leucine 223 lines the substrate pocket. Residue aspartate 251 participates in Zn(2+) binding. Aspartate 251 is an active-site residue. The substrate site is built by histidine 255 and alanine 267.

It belongs to the metallo-dependent hydrolases superfamily. DHOase family. Class II DHOase subfamily. In terms of assembly, homodimer. Zn(2+) serves as cofactor.

The catalysed reaction is (S)-dihydroorotate + H2O = N-carbamoyl-L-aspartate + H(+). It participates in pyrimidine metabolism; UMP biosynthesis via de novo pathway; (S)-dihydroorotate from bicarbonate: step 3/3. Catalyzes the reversible cyclization of carbamoyl aspartate to dihydroorotate. The sequence is that of Dihydroorotase from Shigella flexneri.